The sequence spans 648 residues: DNA ligase (648 aa).

NAD(+)-binding positions include 30–34 (DEEYD), 79–80 (SM), and Glu-108. The N6-AMP-lysine intermediate role is filled by Lys-110. Positions 131, 165, 280, and 304 each coordinate NAD(+). The Zn(2+) site is built by Cys-398, Cys-401, Cys-414, and Cys-419. The region spanning 573–648 (AKENPFKGKI…LTEDEMRAML (76 aa)) is the BRCT domain.

The protein belongs to the NAD-dependent DNA ligase family. LigA subfamily. Mg(2+) is required as a cofactor. Mn(2+) serves as cofactor.

It catalyses the reaction NAD(+) + (deoxyribonucleotide)n-3'-hydroxyl + 5'-phospho-(deoxyribonucleotide)m = (deoxyribonucleotide)n+m + AMP + beta-nicotinamide D-nucleotide.. DNA ligase that catalyzes the formation of phosphodiester linkages between 5'-phosphoryl and 3'-hydroxyl groups in double-stranded DNA using NAD as a coenzyme and as the energy source for the reaction. It is essential for DNA replication and repair of damaged DNA. This is DNA ligase from Sulfurovum sp. (strain NBC37-1).